A 158-amino-acid chain; its full sequence is Cystin-1 (158 aa).

The disordered stretch occupies residues 1-146 (MGSGSSRSSR…AAISYDHSEE (146 aa)). Gly-2 is lipidated: N-myristoyl glycine. Low complexity-rich tracts occupy residues 19-32 (ESLPAGPGAAALEG) and 39-52 (PVAAAEVPGAAAEE). Residues 29 to 33 (ALEGG) carry the Ciliary targeting motif motif. The span at 65–75 (DGRDETLRLLD) shows a compositional bias: basic and acidic residues.

As to quaternary structure, interacts (when myristoylated) with UNC119 and UNC119B; interaction is required for localization to cilium. As to expression, expressed at high levels in the kidney and pancreas. Moderate expression seen in the skeletal muscle, liver and heart. A weak expression seen in the brain, lung, uterus, prostate, testis, small intestine and colon.

Its subcellular location is the cell projection. It localises to the cilium membrane. The protein localises to the cytoplasm. The protein resides in the cytoskeleton. It is found in the cilium axoneme. This chain is Cystin-1 (CYS1), found in Homo sapiens (Human).